A 1338-amino-acid chain; its full sequence is Microtubule-associated tumor suppressor 1 homolog (1338 aa).

Residues Met-1–Lys-27 show a composition bias toward polar residues. Disordered regions lie at residues Met-1–Asn-28 and Glu-399–Lys-421. The stretch at Glu-469 to Ser-494 forms a coiled coil. 2 disordered regions span residues Lys-536–Lys-585 and Leu-636–Asn-695. Polar residues predominate over residues Pro-541 to Thr-555. Composition is skewed to low complexity over residues Pro-561 to Pro-573 and Ala-646 to Ala-661. One can recognise an F-box domain in the interval Ile-731–Gly-774. Disordered stretches follow at residues Pro-788–Pro-808, Ala-883–Leu-925, and Asn-938–Pro-962. Positions Ala-883–Ser-910 are enriched in polar residues. Positions Glu-966 to Leu-1298 form a coiled coil. Residues Pro-1309 to Arg-1338 form a disordered region. The span at Ser-1324–Arg-1338 shows a compositional bias: polar residues.

Belongs to the MTUS1 family. As to quaternary structure, homodimer. Binds microtubules. Interacts with kif2c, aurkb, incenp and SKP1. Probably part of a SCF (SKP1-CUL1-F-box) protein ligase complex. As to expression, present in egg (at protein level).

The protein resides in the nucleus. It is found in the cytoplasm. It localises to the cytoskeleton. The protein localises to the chromosome. Its subcellular location is the midbody. Its function is as follows. Regulates microtubule dynamics during mitosis by stimulating kif2c. Probably recognizes and binds to some phosphorylated proteins and promotes their ubiquitination and degradation. This is Microtubule-associated tumor suppressor 1 homolog (mtus1) from Xenopus laevis (African clawed frog).